A 72-amino-acid polypeptide reads, in one-letter code: Probable neurotoxin pcD-996 (72 aa).

Residues 1-19 (MNYLVMISFALLLVIGVES) form the signal peptide. Positions 21–72 (RDGYFVEPDNCLVYCMPSPEICDRGCKRYGATSGFCKEFSKGENFCWCKGLR) constitute an LCN-type CS-alpha/beta domain. 3 disulfide bridges follow: Cys35/Cys56, Cys42/Cys66, and Cys46/Cys68. Arg72 is a propeptide (removed by a carboxypeptidase).

The protein belongs to the long (3 C-C) scorpion toxin superfamily. As to expression, expressed by the venom gland.

It is found in the secreted. This chain is Probable neurotoxin pcD-996, found in Androctonus australis (Sahara scorpion).